Here is a 501-residue protein sequence, read N- to C-terminus: Cobyric acid synthase (501 aa).

Residues Asp252–Trp443 form the GATase cobBQ-type domain. Catalysis depends on Cys333, which acts as the Nucleophile. His435 is a catalytic residue.

It belongs to the CobB/CobQ family. CobQ subfamily.

It participates in cofactor biosynthesis; adenosylcobalamin biosynthesis. In terms of biological role, catalyzes amidations at positions B, D, E, and G on adenosylcobyrinic A,C-diamide. NH(2) groups are provided by glutamine, and one molecule of ATP is hydrogenolyzed for each amidation. This chain is Cobyric acid synthase, found in Limosilactobacillus reuteri (strain DSM 20016) (Lactobacillus reuteri).